The chain runs to 506 residues: Nondiscriminating glutamyl-tRNA synthetase EARS2, mitochondrial (506 aa).

A mitochondrion-targeting transit peptide spans 1 to 41 (MAALLRRLLQRGRPLAASGRRVGRREARLGTGPGVAVRVRF). Residue 40 to 42 (RFA) coordinates L-glutamate. A 'HIGH' region motif is present at residues 45–53 (PTGFLHLGG). Position 50 (histidine 50) interacts with ATP. L-glutamate contacts are provided by residues glutamate 76, 228–232 (YHLAC), and arginine 246. Residue glutamate 249 participates in ATP binding. Lysine 256 bears the N6-succinyllysine mark. Position 284 to 288 (284 to 288 (KLSKR)) interacts with ATP. A 'KMSKS' region motif is present at residues 284-288 (KLSKR). An N6-acetyllysine modification is found at lysine 486.

The protein belongs to the class-I aminoacyl-tRNA synthetase family. Glutamate--tRNA ligase type 1 subfamily.

The protein resides in the mitochondrion matrix. The catalysed reaction is tRNA(Glx) + L-glutamate + ATP = L-glutamyl-tRNA(Glx) + AMP + diphosphate. It catalyses the reaction tRNA(Glu) + L-glutamate + ATP = L-glutamyl-tRNA(Glu) + AMP + diphosphate. It carries out the reaction tRNA(Gln) + L-glutamate + ATP = L-glutamyl-tRNA(Gln) + AMP + diphosphate. Its function is as follows. Non-discriminating glutamyl-tRNA synthetase that catalyzes aminoacylation of both mitochondrial tRNA(Glu) and tRNA(Gln) and participates in RNA aminoacylation for mitochondrial protein translation. Attachs glutamate to tRNA(Glu) or tRNA(Gln) in a two-step reaction: glutamate is first activated by ATP to form Glu-AMP and then transferred to the acceptor end of tRNA(Glu) or tRNA(Gln). In vitro, cytoplasmic tRNA(Gln) is slightly glutamylated, but with low activity. The sequence is that of Nondiscriminating glutamyl-tRNA synthetase EARS2, mitochondrial from Macaca fascicularis (Crab-eating macaque).